The sequence spans 597 residues: Aspartate--tRNA(Asp/Asn) ligase (597 aa).

Residue glutamate 182 participates in L-aspartate binding. An aspartate region spans residues 206-209 (QLFK). Arginine 228 contributes to the L-aspartate binding site. ATP contacts are provided by residues 228–230 (RDE) and glutamine 237. Residue histidine 456 coordinates L-aspartate. Glutamate 490 serves as a coordination point for ATP. Arginine 497 contributes to the L-aspartate binding site. 542–545 (GFDR) is a binding site for ATP.

Belongs to the class-II aminoacyl-tRNA synthetase family. Type 1 subfamily. Homodimer.

It localises to the cytoplasm. The enzyme catalyses tRNA(Asx) + L-aspartate + ATP = L-aspartyl-tRNA(Asx) + AMP + diphosphate. Its function is as follows. Aspartyl-tRNA synthetase with relaxed tRNA specificity since it is able to aspartylate not only its cognate tRNA(Asp) but also tRNA(Asn). Reaction proceeds in two steps: L-aspartate is first activated by ATP to form Asp-AMP and then transferred to the acceptor end of tRNA(Asp/Asn). This chain is Aspartate--tRNA(Asp/Asn) ligase, found in Desulfatibacillum aliphaticivorans.